We begin with the raw amino-acid sequence, 2045 residues long: Non-reducing polyketide synthase pks27 (2045 aa).

The N-terminal acylcarrier protein transacylase domain (SAT) stretch occupies residues 10–247 (IVFGDLTCDS…LTIPIYAPYH (238 aa)). A Ketosynthase family 3 (KS3) domain is found at 380–813 (HSKLAIIGYS…GGNSSVLIED (434 aa)). Catalysis depends on for beta-ketoacyl synthase activity residues Cys-552, His-687, and His-731. The segment at 913–1213 (FAFTGQGSQY…VPTLQRNKDT (301 aa)) is malonyl-CoA:ACP transacylase (MAT) domain. The interval 1289 to 1422 (HKLVEEKKDG…ASITFPDAKA (134 aa)) is N-terminal hotdog fold. One can recognise a PKS/mFAS DH domain in the interval 1289 to 1599 (HKLVEEKKDG…AQGVPRRLMD (311 aa)). Residue His-1321 is the Proton acceptor; for dehydratase activity of the active site. The segment at 1442–1599 (AARLNTDDRV…AQGVPRRLMD (158 aa)) is C-terminal hotdog fold. Asp-1511 serves as the catalytic Proton donor; for dehydratase activity. The segment at 1612–1636 (APAGGTLNASQSAAANPAADPSAQA) is disordered. Residues 1619-1636 (NASQSAAANPAADPSAQA) show a composition bias toward low complexity. Residues 1635–1712 (QADSDNWQAA…ELEAFWKQGA (78 aa)) enclose the Carrier domain. Positions 1640–1709 (NWQAALKIIS…TIKELEAFWK (70 aa)) are product template (PT) domain. The residue at position 1672 (Ser-1672) is an O-(pantetheine 4'-phosphoryl)serine. Positions 1735–1776 (EAEVDQDKNSSDEDRSSLGTSSYEVISPNTTETTPEITKTSS) are disordered. Over residues 1739–1750 (DQDKNSSDEDRS) the composition is skewed to basic and acidic residues. Low complexity predominate over residues 1760–1776 (ISPNTTETTPEITKTSS). Residues 1798-2039 (TLFLLPDGSG…AKRLSEMIEG (242 aa)) form a thioesterase region.

Requires pantetheine 4'-phosphate as cofactor.

Its pathway is secondary metabolite biosynthesis. In terms of biological role, non-reducing polyketide synthase (NRPKS); part of the gene cluster 27 that mediates the biosynthesis of asparasone A, a sclerotium-specific anthraquinone pigment important for sclerotial survival. Catalyzes the formation of the aromatic polyketide from acetyl coenzyme A and seven malonyl coenzyme A molecules. Through its product template (PT) domain, catalyzes the cyclization of polyketide backbone via C6-C11 aldolcondensation. The chain is Non-reducing polyketide synthase pks27 from Aspergillus flavus (strain ATCC 200026 / FGSC A1120 / IAM 13836 / NRRL 3357 / JCM 12722 / SRRC 167).